A 123-amino-acid polypeptide reads, in one-letter code: Protein Wnt-7b (123 aa).

Serine 1 is lipidated: O-palmitoleoyl serine; by PORCN. Residues 33 to 61 (VEVVRASRLRQPTFLKIKQIRSYQKPMET) form a disordered linker region. Cysteine 89 and cysteine 104 are joined by a disulfide. N-linked (GlcNAc...) asparagine glycosylation is present at asparagine 90.

This sequence belongs to the Wnt family. Palmitoleoylation is required for efficient binding to frizzled receptors. Depalmitoleoylation leads to Wnt signaling pathway inhibition.

It localises to the secreted. It is found in the extracellular space. The protein resides in the extracellular matrix. In terms of biological role, ligand for members of the frizzled family of seven transmembrane receptors that functions in the canonical Wnt/beta-catenin signaling pathway. Required for normal fusion of the chorion and the allantois during placenta development. Required for central nervous system (CNS) angiogenesis and blood-brain barrier regulation. In Sceloporus occidentalis (Western fence lizard), this protein is Protein Wnt-7b (WNT-7B).